The primary structure comprises 294 residues: 4-hydroxy-tetrahydrodipicolinate synthase (294 aa).

Residue threonine 47 coordinates pyruvate. Residue tyrosine 135 is the Proton donor/acceptor of the active site. The active-site Schiff-base intermediate with substrate is lysine 163. Threonine 205 is a binding site for pyruvate.

The protein belongs to the DapA family. In terms of assembly, homotetramer; dimer of dimers.

The protein localises to the cytoplasm. The enzyme catalyses L-aspartate 4-semialdehyde + pyruvate = (2S,4S)-4-hydroxy-2,3,4,5-tetrahydrodipicolinate + H2O + H(+). The protein operates within amino-acid biosynthesis; L-lysine biosynthesis via DAP pathway; (S)-tetrahydrodipicolinate from L-aspartate: step 3/4. Catalyzes the condensation of (S)-aspartate-beta-semialdehyde [(S)-ASA] and pyruvate to 4-hydroxy-tetrahydrodipicolinate (HTPA). The protein is 4-hydroxy-tetrahydrodipicolinate synthase of Rickettsia rickettsii.